Here is a 257-residue protein sequence, read N- to C-terminus: Adenylate kinase (257 aa).

Position 51–56 (51–56 (GAGKGT)) interacts with ATP. The NMP stretch occupies residues 71-100 (ATGDMLRSQVAKKTELGKEAKKIMDQGGLV). AMP contacts are provided by residues threonine 72, arginine 77, 98–100 (GLV), 127–130 (GFPR), and glutamine 134. Residues 168 to 205 (GRLVHPASGRSYHKIFNPPKQEMKDDITGEPLIQRSDD) form an LID region. ATP is bound by residues arginine 169 and 178-179 (SY). Positions 202 and 213 each coordinate AMP. ATP is bound at residue glutamine 241.

It belongs to the adenylate kinase family. AK2 subfamily. In terms of assembly, monomer.

The protein localises to the cytoplasm. The protein resides in the cytosol. It is found in the mitochondrion intermembrane space. The catalysed reaction is AMP + ATP = 2 ADP. Catalyzes the reversible transfer of the terminal phosphate group between ATP and AMP. Plays an important role in cellular energy homeostasis and in adenine nucleotide metabolism. Adenylate kinase activity is critical for regulation of the phosphate utilization and the AMP de novo biosynthesis pathways. The polypeptide is Adenylate kinase (adk1) (Aspergillus terreus (strain NIH 2624 / FGSC A1156)).